Reading from the N-terminus, the 504-residue chain is UNC93-like protein C922.05c (504 aa).

A run of 11 helical transmembrane segments spans residues 64–84 (IIVSWVCFLCPGMFNALSGLG), 97–116 (ANVALYSTFAGLGFFAGSIC), 123–145 (LTLAIGGTGYSVYTASLLCYKHV), 149–169 (GFVIFGGCYLGLTAGMLWAAQ), 186–206 (IAIFWGIFNLGAVIGSIVPLA), 219–239 (GTYAGFIVLMAVGSALALFMV), 275–293 (YWVLLLFPMFFSSNWFTTY), 310–330 (LNNLLYWFAQIMGSAVAALFL), 343–363 (VGWGLVFVLICVIWGGGLAFQ), 391–411 (FLYIFYGMLDAIFQSYAYWII), and 452–472 (YFASCWALLCGSLIVASPVIW).

This sequence belongs to the unc-93 family.

Its subcellular location is the cytoplasm. It localises to the membrane. The polypeptide is UNC93-like protein C922.05c (Schizosaccharomyces pombe (strain 972 / ATCC 24843) (Fission yeast)).